Here is a 384-residue protein sequence, read N- to C-terminus: Isoafricanol synthase (384 aa).

Mg(2+) contacts are provided by Asp95, Asn245, Ser249, and Glu253.

It belongs to the terpene synthase family. Requires Mg(2+) as cofactor.

The catalysed reaction is (2E,6E)-farnesyl diphosphate + H2O = (+)-isoafricanol + diphosphate. Functionally, catalyzes the cyclization of farnesyl diphosphate (FPP) to isoafricanol. This chain is Isoafricanol synthase, found in Streptomyces violaceusniger (strain Tu 4113).